A 251-amino-acid polypeptide reads, in one-letter code: Azurocidin (251 aa).

The signal sequence occupies residues 1–19 (MTRLTVLALLAGLLASSRA). The propeptide at 20–26 (GSSPLLD) is removed in mature form. Residues 25-26 (LD) constitute a propeptide, dipeptide found in non-mature form. The Peptidase S1 domain occupies 27 to 244 (IVGGRKARPR…FRDWIDGVLN (218 aa)). The tract at residues 46-70 (NQGRHFCGGALIHARFVMTAASCFQ) is possesses antibiotic activity. The cysteines at positions 52 and 68 are disulfide-linked. Asn126 carries N-linked (GlcNAc...) asparagine; partial glycosylation. A glycan (N-linked (GlcNAc...) asparagine) is linked at Asn140. Cystine bridges form between Cys149-Cys207, Cys180-Cys186, and Cys197-Cys222. N-linked (GlcNAc...) asparagine; partial glycosylation is present at Asn171. The propeptide at 249–251 (GPA) is removed in mature form.

This sequence belongs to the peptidase S1 family. Elastase subfamily. Post-translationally, cleavage of the N-terminal propeptide which is composed of 7 amino acids occurs in two steps. The initial cleavage of 5 amino acids is followed by the cleavage of a dipeptide to produce the mature form.

The protein localises to the cytoplasmic granule membrane. Its function is as follows. This is a neutrophil granule-derived antibacterial and monocyte- and fibroblast-specific chemotactic glycoprotein. Binds heparin. The cytotoxic action is limited to many species of Gram-negative bacteria; this specificity may be explained by a strong affinity of the very basic N-terminal half for the negatively charged lipopolysaccharides that are unique to the Gram-negative bacterial outer envelope. It may play a role in mediating recruitment of monocytes in the second wave of inflammation. Has antibacterial activity against the Gram-negative bacterium P.aeruginosa, this activity is inhibited by LPS from P.aeruginosa. Acting alone, it does not have antimicrobial activity against the Gram-negative bacteria A.actinomycetemcomitans ATCC 29532, A.actinomycetemcomitans NCTC 9709, A.actinomycetemcomitans FDC-Y4, H.aphrophilus ATCC 13252, E.corrodens ATCC 23834, C.sputigena ATCC 33123, Capnocytophaga sp ATCC 33124, Capnocytophaga sp ATCC 27872 or E.coli ML-35. Has antibacterial activity against C.sputigena ATCC 33123 when acting synergistically with either elastase or cathepsin G. This chain is Azurocidin, found in Homo sapiens (Human).